The chain runs to 179 residues: Large ribosomal subunit protein uL5 (179 aa).

This sequence belongs to the universal ribosomal protein uL5 family. In terms of assembly, part of the 50S ribosomal subunit; part of the 5S rRNA/L5/L18/L25 subcomplex. Contacts the 5S rRNA and the P site tRNA. Forms a bridge to the 30S subunit in the 70S ribosome.

This is one of the proteins that bind and probably mediate the attachment of the 5S RNA into the large ribosomal subunit, where it forms part of the central protuberance. In the 70S ribosome it contacts protein S13 of the 30S subunit (bridge B1b), connecting the 2 subunits; this bridge is implicated in subunit movement. Contacts the P site tRNA; the 5S rRNA and some of its associated proteins might help stabilize positioning of ribosome-bound tRNAs. The chain is Large ribosomal subunit protein uL5 from Desulfovibrio desulfuricans (strain ATCC 27774 / DSM 6949 / MB).